A 360-amino-acid polypeptide reads, in one-letter code: Heat-inducible transcription repressor HrcA (360 aa).

The protein belongs to the HrcA family.

Negative regulator of class I heat shock genes (grpE-dnaK-dnaJ and groELS operons). Prevents heat-shock induction of these operons. The polypeptide is Heat-inducible transcription repressor HrcA (Mesorhizobium japonicum (strain LMG 29417 / CECT 9101 / MAFF 303099) (Mesorhizobium loti (strain MAFF 303099))).